Reading from the N-terminus, the 588-residue chain is Sulfite reductase [NADPH] hemoprotein beta-component (588 aa).

Residues cysteine 442, cysteine 448, cysteine 487, and cysteine 491 each coordinate [4Fe-4S] cluster. Cysteine 491 contacts siroheme.

The protein belongs to the nitrite and sulfite reductase 4Fe-4S domain family. As to quaternary structure, alpha(8)-beta(8). The alpha component is a flavoprotein, the beta component is a hemoprotein. It depends on siroheme as a cofactor. [4Fe-4S] cluster is required as a cofactor.

The enzyme catalyses hydrogen sulfide + 3 NADP(+) + 3 H2O = sulfite + 3 NADPH + 4 H(+). It functions in the pathway sulfur metabolism; hydrogen sulfide biosynthesis; hydrogen sulfide from sulfite (NADPH route): step 1/1. In terms of biological role, component of the sulfite reductase complex that catalyzes the 6-electron reduction of sulfite to sulfide. This is one of several activities required for the biosynthesis of L-cysteine from sulfate. The chain is Sulfite reductase [NADPH] hemoprotein beta-component from Actinobacillus pleuropneumoniae serotype 7 (strain AP76).